Here is a 215-residue protein sequence, read N- to C-terminus: MLAGQLEARDPKEGTHPEDPCPGAGAVMEKTAVAAEVLTEDCNTGEMPPLQQQIIRLHQELGRQKSLWADVHGKLRSHIDALREQNMELREKLRALQLQRWKARKKSAASPHAGQESHTLALEPAFGKISPLSADEETIPKYAGHKNQSATLLGQRSSSNNSAPPKPMSLKIERISSWKTPPQENRDKNLSRRRQDRRATPTGRPTPCAERRGGV.

Positions 1-25 (MLAGQLEARDPKEGTHPEDPCPGAG) are disordered. A compositionally biased stretch (basic and acidic residues) spans 7–19 (EARDPKEGTHPED). Residues 69 to 110 (ADVHGKLRSHIDALREQNMELREKLRALQLQRWKARKKSAAS) are a coiled coil. Residues 75-96 (LRSHIDALREQNMELREKLRAL) are leucine-zipper. The segment covering 150–163 (ATLLGQRSSSNNSA) has biased composition (polar residues). Residues 150–215 (ATLLGQRSSS…TPCAERRGGV (66 aa)) form a disordered region.

This sequence belongs to the TCP10 family. In terms of assembly, self-associates (via leucine zipper). Interacts (via leucine zipper) with ZIPK/DAPK3 (via leucine zipper). Interacts with MAD4. In terms of tissue distribution, expressed in liver and testis. Expressed in the seminiferous tubules (at protein level).

It is found in the nucleus. May be involved in transcriptional regulation. Has in vitro transcription inhibition activity. Acts as a tumor suppressor in hepatocellular carcinoma (HCC) cells. In Homo sapiens (Human), this protein is T-complex protein 10A homolog 1 (TCP10L).